The chain runs to 208 residues: Uracil phosphoribosyltransferase (208 aa).

5-phospho-alpha-D-ribose 1-diphosphate-binding positions include R78, R103, and 130-138 (DPMLATGVS). Residues I193 and 198–200 (GDA) each bind uracil. D199 lines the 5-phospho-alpha-D-ribose 1-diphosphate pocket.

It belongs to the UPRTase family. The cofactor is Mg(2+).

It catalyses the reaction UMP + diphosphate = 5-phospho-alpha-D-ribose 1-diphosphate + uracil. Its pathway is pyrimidine metabolism; UMP biosynthesis via salvage pathway; UMP from uracil: step 1/1. Its activity is regulated as follows. Allosterically activated by GTP. Its function is as follows. Catalyzes the conversion of uracil and 5-phospho-alpha-D-ribose 1-diphosphate (PRPP) to UMP and diphosphate. This chain is Uracil phosphoribosyltransferase, found in Thermosipho melanesiensis (strain DSM 12029 / CIP 104789 / BI429).